The sequence spans 486 residues: Glutamyl-tRNA(Gln) amidotransferase subunit A (486 aa).

Active-site charge relay system residues include lysine 79 and serine 154. The Acyl-ester intermediate role is filled by serine 178.

Belongs to the amidase family. GatA subfamily. As to quaternary structure, heterotrimer of A, B and C subunits.

It catalyses the reaction L-glutamyl-tRNA(Gln) + L-glutamine + ATP + H2O = L-glutaminyl-tRNA(Gln) + L-glutamate + ADP + phosphate + H(+). In terms of biological role, allows the formation of correctly charged Gln-tRNA(Gln) through the transamidation of misacylated Glu-tRNA(Gln) in organisms which lack glutaminyl-tRNA synthetase. The reaction takes place in the presence of glutamine and ATP through an activated gamma-phospho-Glu-tRNA(Gln). The sequence is that of Glutamyl-tRNA(Gln) amidotransferase subunit A from Dehalococcoides mccartyi (strain CBDB1).